A 531-amino-acid chain; its full sequence is Acetate CoA-transferase YdiF (531 aa).

Glutamate 333 functions as the 5-glutamyl coenzyme A thioester intermediate in the catalytic mechanism.

The protein belongs to the 3-oxoacid CoA-transferase family. In terms of assembly, homotetramer; dimer of dimers.

It catalyses the reaction an acyl-CoA + acetate = a carboxylate + acetyl-CoA. Its function is as follows. CoA transferase having broad substrate specificity for short-chain acyl-CoA thioesters with the activity decreasing when the length of the carboxylic acid chain exceeds four carbons. May play a role in short-chain fatty acid metabolism in E.coli. This is Acetate CoA-transferase YdiF (ydiF) from Escherichia coli (strain K12).